A 411-amino-acid polypeptide reads, in one-letter code: Multifunctional CCA protein (411 aa).

Residues glycine 8 and arginine 11 each contribute to the ATP site. 2 residues coordinate CTP: glycine 8 and arginine 11. Positions 21 and 23 each coordinate Mg(2+). 3 residues coordinate ATP: arginine 91, arginine 137, and arginine 140. CTP-binding residues include arginine 91, arginine 137, and arginine 140. Positions 226-327 constitute an HD domain; that stretch reads TGVHVMLVID…LRFLQETDAL (102 aa).

Belongs to the tRNA nucleotidyltransferase/poly(A) polymerase family. Bacterial CCA-adding enzyme type 1 subfamily. Monomer. Can also form homodimers and oligomers. The cofactor is Mg(2+). Ni(2+) is required as a cofactor.

The enzyme catalyses a tRNA precursor + 2 CTP + ATP = a tRNA with a 3' CCA end + 3 diphosphate. It carries out the reaction a tRNA with a 3' CCA end + 2 CTP + ATP = a tRNA with a 3' CCACCA end + 3 diphosphate. Functionally, catalyzes the addition and repair of the essential 3'-terminal CCA sequence in tRNAs without using a nucleic acid template. Adds these three nucleotides in the order of C, C, and A to the tRNA nucleotide-73, using CTP and ATP as substrates and producing inorganic pyrophosphate. tRNA 3'-terminal CCA addition is required both for tRNA processing and repair. Also involved in tRNA surveillance by mediating tandem CCA addition to generate a CCACCA at the 3' terminus of unstable tRNAs. While stable tRNAs receive only 3'-terminal CCA, unstable tRNAs are marked with CCACCA and rapidly degraded. This is Multifunctional CCA protein from Methylobacillus flagellatus (strain ATCC 51484 / DSM 6875 / VKM B-1610 / KT).